The sequence spans 341 residues: Shk1 kinase-binding protein 15 (341 aa).

WD repeat units follow at residues 33–70 (AHEG…QIAD), 77–114 (IANA…LVHT), 119–157 (SHKG…GGKV), 197–234 (SSKS…ILHE), and 237–274 (AHKK…VIEH). The segment at 293–341 (NSEPKNVEDEAAKRQSLDSETSETSSESESESEYYSTSKQPPVKRTKHA) is disordered. A compositionally biased stretch (basic and acidic residues) spans 297 to 309 (KNVEDEAAKRQSL).

In terms of biological role, negatively regulates pak1/shk1 kinase activity leading to proper execution of cytoskeletal remodeling and cytokinetic functions. Interacts with pak1/shk1. This is Shk1 kinase-binding protein 15 (skb15) from Schizosaccharomyces pombe (strain 972 / ATCC 24843) (Fission yeast).